A 752-amino-acid polypeptide reads, in one-letter code: Glutamate carboxypeptidase 2 (752 aa).

The Cytoplasmic segment spans residues 1–22; sequence MWNALQDRDSAEVLGHRQRWLR. A Phosphoserine modification is found at Ser10. The helical; Signal-anchor for type II membrane protein transmembrane segment at 23-44 threads the bilayer; the sequence is VGTLVLALTGTFLIGFLFGWFI. The Extracellular segment spans residues 45 to 752; the sequence is KPSNEATGNV…AAAETLREVA (708 aa). N-linked (GlcNAc...) asparagine glycans are attached at residues Asn78, Asn123, and Asn155. 2 residues coordinate substrate: Arg212 and Asn259. Thr271 and Tyr274 together coordinate Ca(2+). Residues 276 to 589 form an NAALADase region; it reads ANEHAYRHEL…QVRGAMVFEL (314 aa). Asn338 carries an N-linked (GlcNAc...) asparagine glycan. Zn(2+)-binding residues include His379 and Asp389. Glu426 is a substrate binding site. The active-site Nucleophile; for NAALADase activity is the Glu426. Glu427 contacts Zn(2+). Residues Glu435 and Glu438 each contribute to the Ca(2+) site. Residue Asp455 participates in Zn(2+) binding. Asn461 and Asn478 each carry an N-linked (GlcNAc...) asparagine glycan. Residues 519–520, Asn521, 536–538, Tyr554, and 554–555 contribute to the substrate site; these read SG, RAR, and YH. His555 is a binding site for Zn(2+). N-linked (GlcNAc...) asparagine glycosylation is present at Asn615. Ser630 (charge relay system) is an active-site residue. N-linked (GlcNAc...) asparagine glycosylation occurs at Asn640. Catalysis depends on charge relay system residues Asp668 and His691. 701-702 is a binding site for substrate; sequence KY. Asn722 is a glycosylation site (N-linked (GlcNAc...) asparagine).

Belongs to the peptidase M28 family. M28B subfamily. In terms of assembly, homodimer. The cofactor is Zn(2+). In terms of tissue distribution, expressed predominantly in the hippocampal region of the brain and in kidney. Lower levels in the ovary, testis and mandibular gland.

The protein resides in the cell membrane. The catalysed reaction is Release of an unsubstituted, C-terminal glutamyl residue, typically from Ac-Asp-Glu or folylpoly-gamma-glutamates.. With respect to regulation, the NAALADase and folate hydrolase activities are inhibited by quisqualic acid. In terms of biological role, has both folate hydrolase and N-acetylated-alpha-linked-acidic dipeptidase (NAALADase) activity. Has a preference for tri-alpha-glutamate peptides. In the intestine, required for the uptake of folate. In the brain, modulates excitatory neurotransmission through the hydrolysis of the neuropeptide, N-aceylaspartylglutamate (NAAG), thereby releasing glutamate. Functionally, also exhibits a dipeptidyl-peptidase IV type activity. In vitro, cleaves Gly-Pro-AMC. This Mus musculus (Mouse) protein is Glutamate carboxypeptidase 2 (Folh1).